A 139-amino-acid polypeptide reads, in one-letter code: Large ribosomal subunit protein bL17 (139 aa).

The interval 120–139 is disordered; it reads ESAKGQDSGPVHVEGDEEAA.

Belongs to the bacterial ribosomal protein bL17 family. Part of the 50S ribosomal subunit. Contacts protein L32.

This Parvibaculum lavamentivorans (strain DS-1 / DSM 13023 / NCIMB 13966) protein is Large ribosomal subunit protein bL17.